The following is a 530-amino-acid chain: MFS transporter PfmaC (530 aa).

Residues 41–76 (TTAVSDGDNQSSTMSGKTAAGDATSPASGSGSGGWF) form a disordered region. The segment covering 42-56 (TAVSDGDNQSSTMSG) has biased composition (polar residues). Positions 59–69 (AAGDATSPASG) are enriched in low complexity. Helical transmembrane passes span 165–182 (YWLP…LGMY), 195–215 (FFIG…LGCW), 226–246 (ALFV…QAAL), 261–281 (WLFI…LFCF), 324–344 (IFTS…SLTV), 369–389 (NIPT…GFVS), 396–416 (GPVC…FTAW), 422–442 (LLMA…LLAG), 456–476 (AFIL…FQQL), and 493–513 (PSAL…IPLL).

This sequence belongs to the major facilitator superfamily. Allantoate permease family.

The protein resides in the cell membrane. Functionally, MFS transporter; part of the gene cluster that mediates the biosynthesis of dihydroxynaphthalene (DHN)-melanin, a bluish-green pigment forming a dark layer in the conidial wall that protects the conidia from UV radiations. This Pestalotiopsis fici (strain W106-1 / CGMCC3.15140) protein is MFS transporter PfmaC.